A 577-amino-acid chain; its full sequence is Polyadenylate-binding protein, cytoplasmic and nuclear (577 aa).

Over residues 1–10 the composition is skewed to basic and acidic residues; sequence MADITDKTAE. Residues 1–36 are disordered; it reads MADITDKTAEQLENLNIQDDQKQAATGSESQSVENS. N-acetylalanine is present on Ala-2. A Glycyl lysine isopeptide (Lys-Gly) (interchain with G-Cter in ubiquitin) cross-link involves residue Lys-7. The required and sufficient for nuclear export stretch occupies residues 9–61; it reads AEQLENLNIQDDQKQAATGSESQSVENSSASLYVGDLEPSVSEAHLYDIFSPI. The span at 11 to 27 shows a compositional bias: polar residues; it reads QLENLNIQDDQKQAATG. The Nuclear export signal signature appears at 12–17; it reads LENLNI. RRM domains lie at 38-116, 126-203, 219-296, and 322-399; these read ASLY…WSQR, GNIF…PHLS, TNLY…RAQK, and VNLF…IAQR. Position 107 is an omega-N-methylarginine (Arg-107). Position 249 is a phosphoserine (Ser-249). The tract at residues 281–317 is required and sufficient for nuclear import; the sequence is DSELNGEKLYVGRAQKKNERMHVLKKQYEAYRLEKMA. Ser-332 is modified (phosphoserine). Residue Lys-337 forms a Glycyl lysine isopeptide (Lys-Gly) (interchain with G-Cter in ubiquitin) linkage. Phosphoserine is present on Ser-405. The segment at 473-577 is interaction with SUP35; the sequence is PPQFRNGPVY…KEQEQQTEQA (105 aa). Residues 489 to 568 form the PABC domain; sequence GFPRNANDNN…ASAAYESFKK (80 aa).

This sequence belongs to the polyadenylate-binding protein type-1 family. Binds to poly(A) mRNA to form a periodic structure with a packing density of one molecule per 25 adenylate residues. Interacts with the nuclear export factor CRM1 and with the importin SXM1. Interacts with RNA15, a component of the cleavage factor IA (CFIA) complex. Interacts with translation initiation factor eIF4G (TIF4631 or TIF4632) and release factor eRF3 (SUP35). Interacts with the PAB-dependent poly(A)-nuclease (PAN) complex regulatory subunit PAN3. Interacts with ARF1, DCP1, PBP1, the Hsp70 chaperone SSA1, and TPA1. Interacts with PAT1 in an RNA-dependent manner.

It localises to the cytoplasm. It is found in the nucleus. Binds the poly(A) tail of mRNA. Appears to be an important mediator of the multiple roles of the poly(A) tail in mRNA biogenesis, stability and translation. In the nucleus, interacts with the nuclear cleavage factor IA (CFIA), which is required for both mRNA cleavage and polyadenylation. Is also required for efficient mRNA export to the cytoplasm. Acts in concert with a poly(A)-specific nuclease (PAN) to affect poly(A) tail shortening, which may occur concomitantly with either nucleocytoplasmic mRNA transport or translational initiation. Regulates PAN activity via interaction with the stimulator PAN3 or the inhibitor PBP1. In the cytoplasm, affects both translation and mRNA decay. Stimulates translation by interaction with translation initiation factor eIF4G, a subunit of the cap-binding complex eIF4F, bringing the 5'- and 3'-ends of the mRNA in proximity. The formation of this circular mRNP structure appears to be critical for the synergistic effects of the cap and the poly(A) tail in facilitating translation initiation, recycling of ribosomes, and mRNA stability. Also regulates translation termination by recruiting eukaryotic release factor 3 (eRF3). Interaction with eRF3 is also required for regulation of normal mRNA decay through translation termination-coupled poly(A) shortening, probably mediated by PAN. Loss of PAB1 from the mRNP after deadenylation triggers mRNA degradation. Inhibits the major cytoplasmic mRNA deadenylase CCR4-NOT complex. Is also associated peripherally with COPI vesicles through its interaction with ARF1, and this is required for correct localization of the asymmetrically distributed ASH1 mRNA. The chain is Polyadenylate-binding protein, cytoplasmic and nuclear (PAB1) from Saccharomyces cerevisiae (strain ATCC 204508 / S288c) (Baker's yeast).